The chain runs to 183 residues: MHASASQDKNRRKPGHDEGAHNPDYENITLAFRNKDQLKLSQSTPTKQAKFKTSLDPAESPPWLYRTIMMLYVLLALVFLSCIVLSALVLVKNSEMSKELWTLKAELSNVSDTVWNIRELQNQQTRIWEAAQGDIKEVKKTLGTVMSSIQTGNDRLKTVPADITQIKKTLEALEKKAQPQPST.

The interval 1-26 (MHASASQDKNRRKPGHDEGAHNPDYE) is disordered. The Cytoplasmic portion of the chain corresponds to 1-70 (MHASASQDKN…PPWLYRTIMM (70 aa)). Basic and acidic residues predominate over residues 15 to 24 (GHDEGAHNPD). The helical; Signal-anchor for type II membrane protein transmembrane segment at 71–91 (LYVLLALVFLSCIVLSALVLV) threads the bilayer. Residues 92 to 183 (KNSEMSKELW…EKKAQPQPST (92 aa)) lie on the Extracellular side of the membrane. N-linked (GlcNAc...) asparagine glycosylation is present at Asn109.

It is found in the membrane. This is Mast cell-expressed membrane protein 1 from Mus musculus (Mouse).